The primary structure comprises 210 residues: Ras-related protein RABC2a (210 aa).

20-27 (GDSGVGKS) contacts GTP. Positions 41–49 (LAPTIGVDF) match the Effector region motif. Residues 67–71 (DTAGQ), 127–130 (NKVD), and 157–158 (SA) each bind GTP. Residues Cys-208 and Cys-209 are each lipidated (S-geranylgeranyl cysteine).

The protein belongs to the small GTPase superfamily. Rab family. As to quaternary structure, interacts with XI-2/MYA2.

The protein resides in the cell membrane. The protein localises to the cytoplasm. Intracellular vesicle trafficking and protein transport. The chain is Ras-related protein RABC2a (RABC2A) from Arabidopsis thaliana (Mouse-ear cress).